The chain runs to 689 residues: MTASSGTPPHQTVERARELREQLGTAQHEYYVLDRPTLSDQEYDRLFRELQGIEAEYPTLCTEDSPTRRVGAPVQSAFSPHRHLVRMLSLDNAFDLSELEDFEQSLKRVVGDAIHTSGYTVELKIDGAAVALTYREGVLVTAATRGDGTDGEDVTANVRTIRGVPLRLHGDNHPPLMEVRGEVYLPFAGFERMNEARVAAGEPVYVNPRNAAAGSMRQLDSANTAARPLRFFGYAAVLPDGSAPARSQWELLEQLSAWGVPVAPHRQRCHTIQEAEAWATVVEHETRATLGFAIDGGVVKVNDMALQDELGIRADRTPRWGVARKFAPDMALTKLRRIDVNVGRTGVLTPFAVLEPVDVGGATVTFASLHNADQIAAKDLREGDTVQVVRAGDVIPYVLGPVPEQRDGSQQPWSMPTQCPRCNTPVERYGDDVAVYCPNVACPGRQLEGLVHFSSKDALDIDGLSYARIQQLLDAGLVHDVADLFDITVDQLTSLERFAKKSAENLVAAIAAAKQQPLSRLMFGLGIRHVGAQAAQLLSRQYGSLDALMNATAEQLGAVRGIGSIIAQSVASYFADPTTRALMERLRARGLRFDEPNAVQADGVLTGATVVLTGTLPSLSRGEATALVEQAGGRVTSSVSKKTTFVVAGEEAGSKLDKAKELGVTVLTEAELLEKLSGASADASADASA.

Residues 40–44 (DQEYD), 89–90 (SL), and Glu122 contribute to the NAD(+) site. Lys124 acts as the N6-AMP-lysine intermediate in catalysis. The NAD(+) site is built by Arg145, Glu182, Lys300, and Lys325. The Zn(2+) site is built by Cys419, Cys422, Cys437, and Cys442. The BRCT domain maps to 600-689 (QADGVLTGAT…SADASADASA (90 aa)).

It belongs to the NAD-dependent DNA ligase family. LigA subfamily. Mg(2+) serves as cofactor. The cofactor is Mn(2+).

It carries out the reaction NAD(+) + (deoxyribonucleotide)n-3'-hydroxyl + 5'-phospho-(deoxyribonucleotide)m = (deoxyribonucleotide)n+m + AMP + beta-nicotinamide D-nucleotide.. In terms of biological role, DNA ligase that catalyzes the formation of phosphodiester linkages between 5'-phosphoryl and 3'-hydroxyl groups in double-stranded DNA using NAD as a coenzyme and as the energy source for the reaction. It is essential for DNA replication and repair of damaged DNA. The chain is DNA ligase from Gemmatimonas aurantiaca (strain DSM 14586 / JCM 11422 / NBRC 100505 / T-27).